Reading from the N-terminus, the 450-residue chain is Tubulin alpha-1 chain (450 aa).

Residues glutamine 11, glutamate 71, glycine 144, threonine 145, threonine 179, asparagine 206, and asparagine 228 each contribute to the GTP site. Glutamate 71 is a Mg(2+) binding site. The active site involves glutamate 254.

Belongs to the tubulin family. Dimer of alpha and beta chains. A typical microtubule is a hollow water-filled tube with an outer diameter of 25 nm and an inner diameter of 15 nM. Alpha-beta heterodimers associate head-to-tail to form protofilaments running lengthwise along the microtubule wall with the beta-tubulin subunit facing the microtubule plus end conferring a structural polarity. Microtubules usually have 13 protofilaments but different protofilament numbers can be found in some organisms and specialized cells. Mg(2+) is required as a cofactor. In terms of processing, undergoes a tyrosination/detyrosination cycle, the cyclic removal and re-addition of a C-terminal tyrosine residue by the enzymes tubulin tyrosine carboxypeptidase (TTCP) and tubulin tyrosine ligase (TTL), respectively.

The protein resides in the cytoplasm. The protein localises to the cytoskeleton. The catalysed reaction is GTP + H2O = GDP + phosphate + H(+). Functionally, tubulin is the major constituent of microtubules, a cylinder consisting of laterally associated linear protofilaments composed of alpha- and beta-tubulin heterodimers. Microtubules grow by the addition of GTP-tubulin dimers to the microtubule end, where a stabilizing cap forms. Below the cap, tubulin dimers are in GDP-bound state, owing to GTPase activity of alpha-tubulin. This Hordeum vulgare (Barley) protein is Tubulin alpha-1 chain (TUBA1).